The primary structure comprises 104 residues: Large ribosomal subunit protein uL24 (104 aa).

Belongs to the universal ribosomal protein uL24 family. In terms of assembly, part of the 50S ribosomal subunit.

One of two assembly initiator proteins, it binds directly to the 5'-end of the 23S rRNA, where it nucleates assembly of the 50S subunit. In terms of biological role, one of the proteins that surrounds the polypeptide exit tunnel on the outside of the subunit. The sequence is that of Large ribosomal subunit protein uL24 from Pseudomonas entomophila (strain L48).